A 369-amino-acid polypeptide reads, in one-letter code: NAD(P)H-quinone oxidoreductase subunit 1, chloroplastic (369 aa).

Helical transmembrane passes span Ile-29–Ile-49, Ile-97–Val-117, Leu-129–Met-149, Ala-167–Leu-187, Leu-205–Leu-225, Phe-255–Val-275, Ile-305–Val-325, and Phe-348–Leu-368.

The protein belongs to the complex I subunit 1 family. As to quaternary structure, NDH is composed of at least 16 different subunits, 5 of which are encoded in the nucleus.

The protein resides in the plastid. It is found in the chloroplast thylakoid membrane. The enzyme catalyses a plastoquinone + NADH + (n+1) H(+)(in) = a plastoquinol + NAD(+) + n H(+)(out). The catalysed reaction is a plastoquinone + NADPH + (n+1) H(+)(in) = a plastoquinol + NADP(+) + n H(+)(out). NDH shuttles electrons from NAD(P)H:plastoquinone, via FMN and iron-sulfur (Fe-S) centers, to quinones in the photosynthetic chain and possibly in a chloroplast respiratory chain. The immediate electron acceptor for the enzyme in this species is believed to be plastoquinone. Couples the redox reaction to proton translocation, and thus conserves the redox energy in a proton gradient. The sequence is that of NAD(P)H-quinone oxidoreductase subunit 1, chloroplastic from Angiopteris evecta (Mule's foot fern).